Here is a 354-residue protein sequence, read N- to C-terminus: Serum paraoxonase/arylesterase 2 (354 aa).

An intrachain disulfide couples C42 to C352. Residues D53 and D54 each coordinate Ca(2+). H114 serves as the catalytic Proton acceptor. Positions 116, 167, 168, and 223 each coordinate Ca(2+). N-linked (GlcNAc...) asparagine glycosylation is present at N254. Positions 268 and 269 each coordinate Ca(2+). Residues N269 and N323 are each glycosylated (N-linked (GlcNAc...) asparagine).

The protein belongs to the paraoxonase family. As to quaternary structure, homotrimer. It depends on Ca(2+) as a cofactor. In terms of processing, glycosylated. Post-translationally, the signal sequence is not cleaved.

It localises to the membrane. The enzyme catalyses a phenyl acetate + H2O = a phenol + acetate + H(+). It carries out the reaction an N-acyl-L-homoserine lactone + H2O = an N-acyl-L-homoserine + H(+). Functionally, capable of hydrolyzing lactones and a number of aromatic carboxylic acid esters. This chain is Serum paraoxonase/arylesterase 2 (PON2), found in Canis lupus familiaris (Dog).